The chain runs to 274 residues: 4-deoxy-L-threo-5-hexosulose-uronate ketol-isomerase (274 aa).

His192, His194, Glu199, and His241 together coordinate Zn(2+).

Belongs to the KduI family. It depends on Zn(2+) as a cofactor.

It carries out the reaction 5-dehydro-4-deoxy-D-glucuronate = 3-deoxy-D-glycero-2,5-hexodiulosonate. It functions in the pathway glycan metabolism; pectin degradation; 2-dehydro-3-deoxy-D-gluconate from pectin: step 4/5. In terms of biological role, catalyzes the isomerization of 5-dehydro-4-deoxy-D-glucuronate to 3-deoxy-D-glycero-2,5-hexodiulosonate. This Cereibacter sphaeroides (strain ATCC 17029 / ATH 2.4.9) (Rhodobacter sphaeroides) protein is 4-deoxy-L-threo-5-hexosulose-uronate ketol-isomerase.